Here is a 192-residue protein sequence, read N- to C-terminus: MIDDLIQKEFLAHKEALKKSLESLQEMLKQSVHLLIETLENQGKILICGNGGSASDAQHFAAELTGRYKLERKGLSAISLSTDTSALTAIANDYGYEEVFARQVEALGNKEDVLIGISTSGNSKNVLKAYEKAKDLGMKTLSLAGRDGGKMKPLSDMALIVPSDDTPRIQEMHILMIHILCDCIERHFAHKN.

The region spanning 35–192 (LIETLENQGK…CIERHFAHKN (158 aa)) is the SIS domain. 50–52 (NGG) lines the substrate pocket. 2 residues coordinate Zn(2+): His-59 and Glu-63. Substrate is bound by residues Glu-63, 92-93 (ND), 118-120 (STS), Ser-123, and Gln-170. Zn(2+) contacts are provided by Gln-170 and His-178.

It belongs to the SIS family. GmhA subfamily. Homotetramer. The cofactor is Zn(2+).

It localises to the cytoplasm. The catalysed reaction is 2 D-sedoheptulose 7-phosphate = D-glycero-alpha-D-manno-heptose 7-phosphate + D-glycero-beta-D-manno-heptose 7-phosphate. Its pathway is carbohydrate biosynthesis; D-glycero-D-manno-heptose 7-phosphate biosynthesis; D-glycero-alpha-D-manno-heptose 7-phosphate and D-glycero-beta-D-manno-heptose 7-phosphate from sedoheptulose 7-phosphate: step 1/1. Catalyzes the isomerization of sedoheptulose 7-phosphate in D-glycero-D-manno-heptose 7-phosphate. The sequence is that of Phosphoheptose isomerase from Helicobacter pylori (strain P12).